A 342-amino-acid polypeptide reads, in one-letter code: Ornithine carbamoyltransferase, catabolic (342 aa).

Carbamoyl phosphate contacts are provided by residues 59–62 (STRT), Ser-83, Arg-110, and 137–140 (HPTQ). L-ornithine contacts are provided by residues Asn-169, Asp-235, and 239-240 (SL). Carbamoyl phosphate is bound by residues 276–277 (CL) and Arg-328.

It belongs to the aspartate/ornithine carbamoyltransferase superfamily. OTCase family. In terms of assembly, dodecamer (tetramer of trimers).

The protein resides in the cytoplasm. It carries out the reaction carbamoyl phosphate + L-ornithine = L-citrulline + phosphate + H(+). The protein operates within amino-acid degradation; L-arginine degradation via ADI pathway; carbamoyl phosphate from L-arginine: step 2/2. Its function is as follows. nvolved in the catabolism of arginine. Catalyzes the phosphorolysis of citrulline, the reverse reaction of the biosynthetic one, yielding ornithine and carbamoyl phosphate which serve to generate ATP from ADP. The sequence is that of Ornithine carbamoyltransferase, catabolic (arcB) from Malacoplasma penetrans (strain HF-2) (Mycoplasma penetrans).